The following is a 200-amino-acid chain: Adenine phosphoribosyltransferase (200 aa).

This sequence belongs to the purine/pyrimidine phosphoribosyltransferase family. In terms of assembly, homodimer.

It is found in the cytoplasm. The catalysed reaction is AMP + diphosphate = 5-phospho-alpha-D-ribose 1-diphosphate + adenine. The protein operates within purine metabolism; AMP biosynthesis via salvage pathway; AMP from adenine: step 1/1. In terms of biological role, catalyzes a salvage reaction resulting in the formation of AMP, that is energically less costly than de novo synthesis. In Sorangium cellulosum (strain So ce56) (Polyangium cellulosum (strain So ce56)), this protein is Adenine phosphoribosyltransferase.